The following is a 126-amino-acid chain: Probable 4-amino-4-deoxy-L-arabinose-phosphoundecaprenol flippase subunit ArnF (126 aa).

A helical membrane pass occupies residues 1–21; that stretch reads MGFFWALLSVGLVSAAQLLLR. Over 22 to 47 the chain is Periplasmic; it reads SAMVALPPLTDIVAFLQHLLHFQPGT. A helical membrane pass occupies residues 48 to 68; that stretch reads FGLFFGLLGYLLSMVCWYFAL. Residues 69–76 lie on the Cytoplasmic side of the membrane; sequence HRLPLSKA. The helical transmembrane segment at 77–97 threads the bilayer; the sequence is YALLSLSYILVWAAAIWLPGW. Over 98–100 the chain is Periplasmic; it reads HEP. A helical transmembrane segment spans residues 101–121; it reads FYWQSLLGVAIIVAGVLTIFW. The Cytoplasmic portion of the chain corresponds to 122-126; sequence PVKRR.

Belongs to the ArnF family. As to quaternary structure, heterodimer of ArnE and ArnF.

It is found in the cell inner membrane. It participates in bacterial outer membrane biogenesis; lipopolysaccharide biosynthesis. Functionally, translocates 4-amino-4-deoxy-L-arabinose-phosphoundecaprenol (alpha-L-Ara4N-phosphoundecaprenol) from the cytoplasmic to the periplasmic side of the inner membrane. This chain is Probable 4-amino-4-deoxy-L-arabinose-phosphoundecaprenol flippase subunit ArnF, found in Klebsiella pneumoniae subsp. pneumoniae (strain ATCC 700721 / MGH 78578).